The chain runs to 729 residues: Polyribonucleotide nucleotidyltransferase (729 aa).

D516 and D522 together coordinate Mg(2+). The region spanning 581–641 is the KH domain; it reads PSTEHFSINP…EKVAAAKEHI (61 aa). Positions 658–725 constitute an S1 motif domain; sequence GKTYVGKVKK…KGKKVELATP (68 aa).

Belongs to the polyribonucleotide nucleotidyltransferase family. The cofactor is Mg(2+).

The protein localises to the cytoplasm. The catalysed reaction is RNA(n+1) + phosphate = RNA(n) + a ribonucleoside 5'-diphosphate. In terms of biological role, involved in mRNA degradation. Catalyzes the phosphorolysis of single-stranded polyribonucleotides processively in the 3'- to 5'-direction. The chain is Polyribonucleotide nucleotidyltransferase from Sulfurovum sp. (strain NBC37-1).